Consider the following 637-residue polypeptide: Sec1 family domain-containing protein 1 (637 aa).

Phosphoserine is present on residues Ser-32, Ser-298, and Ser-523.

This sequence belongs to the STXBP/unc-18/SEC1 family. In terms of assembly, interacts with STX17. Interacts with the COG complex via COG4. Interacts with STX5A. Highly expressed in testis. Detected at lower levels in brain, astrocytes, heart and small intestine.

The protein resides in the cytoplasm. The protein localises to the endoplasmic reticulum membrane. It localises to the golgi apparatus. Its subcellular location is the golgi stack membrane. Its function is as follows. Plays a role in SNARE-pin assembly and Golgi-to-ER retrograde transport via its interaction with COG4. Involved in vesicular transport between the endoplasmic reticulum and the Golgi. The protein is Sec1 family domain-containing protein 1 (Scfd1) of Rattus norvegicus (Rat).